The primary structure comprises 160 residues: DNA topoisomerase small subunit (160 aa).

In terms of assembly, part of the DNA topoisomerase complex made of gp39, gp52 and gp60. Mg(2+) serves as cofactor.

It carries out the reaction ATP-dependent breakage, passage and rejoining of double-stranded DNA.. Its function is as follows. Small subunit of the DNA topoisomerase that untwists superhelical DNA. Controls topological states of double-stranded DNA by transient breakage and subsequent rejoining of DNA strands. The protein is DNA topoisomerase small subunit (60) of Enterobacteria phage T4 (Bacteriophage T4).